Here is a 491-residue protein sequence, read N- to C-terminus: (S)-canadine synthase (491 aa).

A helical transmembrane segment spans residues 6–26 (LLVCATVAIVFATTTIIRILF). Position 434 (cysteine 434) interacts with heme.

It belongs to the cytochrome P450 family. Requires heme as cofactor. In terms of tissue distribution, expressed at low levels in roots.

The protein localises to the endoplasmic reticulum membrane. It localises to the microsome membrane. The enzyme catalyses (S)-tetrahydrocolumbamine + reduced [NADPH--hemoprotein reductase] + O2 = (S)-canadine + oxidized [NADPH--hemoprotein reductase] + 2 H2O + H(+). In terms of biological role, involved in the last but one step of the biosynthesis of berberine, an antimicrobial benzylisoquinoline alkaloid. Converts (S)-tetrahydrocolumbamine (THC) to (S)-tetrahydroberberine (THB) also called (S)-canadine. The polypeptide is (S)-canadine synthase (CYP719A1) (Coptis japonica (Japanese goldthread)).